Consider the following 240-residue polypeptide: 6-phosphogluconolactonase (240 aa).

It belongs to the glucosamine/galactosamine-6-phosphate isomerase family. 6-phosphogluconolactonase subfamily.

It carries out the reaction 6-phospho-D-glucono-1,5-lactone + H2O = 6-phospho-D-gluconate + H(+). The protein operates within carbohydrate degradation; pentose phosphate pathway; D-ribulose 5-phosphate from D-glucose 6-phosphate (oxidative stage): step 2/3. Hydrolysis of 6-phosphogluconolactone to 6-phosphogluconate. This is 6-phosphogluconolactonase (pgl) from Nostoc sp. (strain PCC 7120 / SAG 25.82 / UTEX 2576).